Consider the following 250-residue polypeptide: tRNA (guanine-N(1)-)-methyltransferase (250 aa).

Residues Gly-116 and 136–141 each bind S-adenosyl-L-methionine; that span reads IGDYVL.

Belongs to the RNA methyltransferase TrmD family. In terms of assembly, homodimer.

Its subcellular location is the cytoplasm. The catalysed reaction is guanosine(37) in tRNA + S-adenosyl-L-methionine = N(1)-methylguanosine(37) in tRNA + S-adenosyl-L-homocysteine + H(+). Specifically methylates guanosine-37 in various tRNAs. The polypeptide is tRNA (guanine-N(1)-)-methyltransferase (Pseudomonas putida (strain W619)).